The chain runs to 362 residues: Phosphoserine aminotransferase (362 aa).

Arg-41 contributes to the L-glutamate binding site. Pyridoxal 5'-phosphate-binding positions include Gly-75 to Ser-76, Phe-101, Thr-152, Asp-173, and Gln-196. An N6-(pyridoxal phosphate)lysine modification is found at Lys-197. Asn-239 to Thr-240 is a pyridoxal 5'-phosphate binding site.

Belongs to the class-V pyridoxal-phosphate-dependent aminotransferase family. SerC subfamily. As to quaternary structure, homodimer. The cofactor is pyridoxal 5'-phosphate.

It localises to the cytoplasm. The catalysed reaction is O-phospho-L-serine + 2-oxoglutarate = 3-phosphooxypyruvate + L-glutamate. It carries out the reaction 4-(phosphooxy)-L-threonine + 2-oxoglutarate = (R)-3-hydroxy-2-oxo-4-phosphooxybutanoate + L-glutamate. Its pathway is amino-acid biosynthesis; L-serine biosynthesis; L-serine from 3-phospho-D-glycerate: step 2/3. Its function is as follows. Catalyzes the reversible conversion of 3-phosphohydroxypyruvate to phosphoserine and of 3-hydroxy-2-oxo-4-phosphonooxybutanoate to phosphohydroxythreonine. This is Phosphoserine aminotransferase from Leuconostoc mesenteroides subsp. mesenteroides (strain ATCC 8293 / DSM 20343 / BCRC 11652 / CCM 1803 / JCM 6124 / NCDO 523 / NBRC 100496 / NCIMB 8023 / NCTC 12954 / NRRL B-1118 / 37Y).